The sequence spans 539 residues: Glutathione synthetase, chloroplastic (539 aa).

The N-terminal 61 residues, 1-61, are a transit peptide targeting the chloroplast; the sequence is MGSGCSSLSY…SPLRCGRSFK (61 aa). Substrate is bound at residue R193. An ATP-binding site is contributed by E209. E209 and N211 together coordinate Mg(2+). Substrate contacts are provided by residues 213-216, 281-283, Q287, and 335-338; these read ISCS, ERN, and RSGY. Residues K374, 428–437, Y439, 464–467, and E490 each bind ATP; these read KPQREGGGNN and MQRI. E432 is a binding site for Mg(2+). R515 contributes to the substrate binding site. Residues K517 and E523 each contribute to the ATP site. 526-527 lines the substrate pocket; sequence VA.

It belongs to the eukaryotic GSH synthase family. Homodimer. Requires Mg(2+) as cofactor.

The protein localises to the plastid. It localises to the chloroplast. The enzyme catalyses gamma-L-glutamyl-L-cysteine + glycine + ATP = glutathione + ADP + phosphate + H(+). It functions in the pathway sulfur metabolism; glutathione biosynthesis; glutathione from L-cysteine and L-glutamate: step 2/2. This is Glutathione synthetase, chloroplastic (GSH2) from Arabidopsis thaliana (Mouse-ear cress).